Consider the following 263-residue polypeptide: tRNA dimethylallyltransferase (263 aa).

The protein belongs to the IPP transferase family. Monomer. The cofactor is Mg(2+).

It carries out the reaction adenosine(37) in tRNA + dimethylallyl diphosphate = N(6)-dimethylallyladenosine(37) in tRNA + diphosphate. Catalyzes the transfer of a dimethylallyl group onto the adenine at position 37 in tRNAs that read codons beginning with uridine, leading to the formation of N6-(dimethylallyl)adenosine (i(6)A). This Leifsonia xyli subsp. xyli (strain CTCB07) protein is tRNA dimethylallyltransferase.